The following is a 2123-amino-acid chain: Bromodomain adjacent to zinc finger domain protein 2B (2123 aa).

7 disordered regions span residues 1 to 129 (MESG…VNGT), 144 to 306 (TPAS…LSQQ), 357 to 402 (PSPD…EMGK), 473 to 534 (NENV…HPHP), 546 to 691 (RGTD…RRVA), 756 to 793 (RAMD…GSAE), and 937 to 960 (ARKK…LNKE). Residues 7–46 (LPSSPASSTTPTSSSAPSVASAVSKSSLSTGAASLSSTAS) show a composition bias toward low complexity. The segment covering 83–95 (FFPPLLGIPPLFA) has biased composition (pro residues). Over residues 100–116 (NHDSSFHSRTSGKSSRN) the composition is skewed to polar residues. 2 stretches are compositionally biased toward low complexity: residues 147–157 (SSSMGQNQSTS) and 193–216 (ESSS…ISSS). Acidic residues predominate over residues 217–243 (DSDDLEEEEEEDQSVEESEDDDSDSET). Positions 259–277 (SDPKTDGQKATEKAQERRT) are enriched in basic and acidic residues. 2 stretches are compositionally biased toward low complexity: residues 291 to 306 (PPFQ…LSQQ) and 366 to 379 (NKNT…LTSE). The segment covering 473 to 502 (NENVSSSTPFSSPVNLSTSGRRAPGSQTPA) has biased composition (polar residues). Residues 546–559 (RGTDSDVPSSKDSE) are compositionally biased toward basic and acidic residues. Acidic residues predominate over residues 560–587 (DSNEDEEEDDEEEDEEDDEDDESDDSQS). Residues 588–597 (ESDSNSQSDS) are compositionally biased toward low complexity. The span at 598-615 (EGSEDDEEKDQEESDSDT) shows a compositional bias: acidic residues. Composition is skewed to low complexity over residues 628 to 637 (SSSAKSPPSS) and 671 to 683 (TSSS…PHSG). An MBD domain is found at 690 to 765 (VADDQELRIP…RAMDGRRGRP (76 aa)). The span at 756 to 778 (RAMDGRRGRPPNPDRPRAREESR) shows a compositional bias: basic and acidic residues. A DDT domain is found at 1004–1069 (GTTFSDCLMV…LSAAVCDPGL (66 aa)). Disordered regions lie at residues 1183-1260 (RDAS…QTAS), 1396-1444 (PPES…KTDA), 1499-1526 (TLVT…SSVQ), and 1588-1614 (FLTS…AQPV). The span at 1214-1238 (SDYDDDDDDDSDDQADEDEEDEEDK) shows a compositional bias: acidic residues. Over residues 1239–1248 (DDKKGKKTDI) the composition is skewed to basic and acidic residues. A coiled-coil region spans residues 1254 to 1281 (EGDQTASVEELEKQIEKLSKQQSQYRRK). Composition is skewed to polar residues over residues 1408 to 1422 (NVST…QNSG) and 1430 to 1444 (PSAT…KTDA). Residues 1505-1515 (SQPPSKSPSPA) are compositionally biased toward pro residues. Over residues 1588-1600 (FLTSSVASSKSDS) the composition is skewed to low complexity. The segment at 1886 to 1936 (KVYCQICRKGDNEELLLLCDGCDKGCHTYCHRPKITTIPDGDWFCPACISK) adopts a PHD-type zinc-finger fold. Residues 1949 to 2013 (VKGKKTNDSK…AESTTSIKKP (65 aa)) are disordered. Positions 1984 to 1995 (GSKELKKRKMEE) are enriched in basic and acidic residues. A compositionally biased stretch (polar residues) spans 1996 to 2010 (TTSLNLSKAESTTSI). The Bromo domain maps to 2015 to 2119 (KDESRDLALC…KYFEKKWTDT (105 aa)).

This sequence belongs to the WAL family. In terms of assembly, component of the BRF-1 ISWI chromatin remodeling complex, at least composed of SMARCA1 and BAZ2B, which regulates the spacing of histone octamers on the DNA template to facilitate access to DNA. Within the BRF-1 ISWI chromatin remodeling complex interacts with SMARCA1; the interaction is direct. Component of the BRF-5 ISWI chromatin remodeling complex, at least composed of SMARCA5/SNF2H and BAZ2B, which regulates the spacing of histone octamers on the DNA template to facilitate access to DNA. Within the BRF-5 ISWI chromatin remodeling complex interacts with SMARCA5/SNF2H; the interaction is direct. Interacts with acetylated lysine residues on histone H1.4, H2A, H2B, H3 and H4 (in vitro). Interacts with EHMT1.

The protein localises to the nucleus. In terms of biological role, regulatory subunit of the ATP-dependent BRF-1 and BRF-5 ISWI chromatin remodeling complexes, which form ordered nucleosome arrays on chromatin and facilitate access to DNA during DNA-templated processes such as DNA replication, transcription, and repair. Both complexes regulate the spacing of nucleosomes along the chromatin and have the ability to slide mononucleosomes to the center of a DNA template. The BRF-1 ISWI chromatin remodeling complex has a lower ATP hydrolysis rate than the BRF-5 ISWI chromatin remodeling complex. Chromatin reader protein, involved in positively modulating the rate of age-related behavioral deterioration. Represses the expression of mitochondrial function-related genes, perhaps by occupying their promoter regions, working in concert with histone methyltransferase EHMT1. This is Bromodomain adjacent to zinc finger domain protein 2B from Mus musculus (Mouse).